The sequence spans 218 residues: Guanylate kinase (218 aa).

Positions 10-190 (GLLIILSSPS…TEERLKTIIT (181 aa)) constitute a Guanylate kinase-like domain. 17 to 24 (SPSGAGKS) lines the ATP pocket.

This sequence belongs to the guanylate kinase family.

Its subcellular location is the cytoplasm. It carries out the reaction GMP + ATP = GDP + ADP. In terms of biological role, essential for recycling GMP and indirectly, cGMP. This chain is Guanylate kinase, found in Jannaschia sp. (strain CCS1).